A 297-amino-acid polypeptide reads, in one-letter code: Cytidine deaminase (297 aa).

2 CMP/dCMP-type deaminase domains span residues 50-170 and 189-297; these read SDKE…FGPK and ETES…YASL. 91-93 provides a ligand contact to substrate; it reads NME. Histidine 104 contacts Zn(2+). Glutamate 106 (proton donor) is an active-site residue. Zn(2+)-binding residues include cysteine 131 and cysteine 134.

Belongs to the cytidine and deoxycytidylate deaminase family. In terms of assembly, homodimer. It depends on Zn(2+) as a cofactor.

It carries out the reaction cytidine + H2O + H(+) = uridine + NH4(+). It catalyses the reaction 2'-deoxycytidine + H2O + H(+) = 2'-deoxyuridine + NH4(+). This enzyme scavenges exogenous and endogenous cytidine and 2'-deoxycytidine for UMP synthesis. This Aliivibrio fischeri (strain ATCC 700601 / ES114) (Vibrio fischeri) protein is Cytidine deaminase.